Consider the following 90-residue polypeptide: Putative ATPase inhibitor, mitochondrial (90 aa).

The stretch at 42-89 (ESREKAKEDFFVHQHEIEQLRKLKESLKLHREELDELESRVDKKMKSN) forms a coiled coil.

Belongs to the ATPase inhibitor family.

It is found in the mitochondrion. Functionally, forms a one-to-one complex with ATPase to inhibit the enzyme activity completely. This is Putative ATPase inhibitor, mitochondrial (inh1) from Schizosaccharomyces pombe (strain 972 / ATCC 24843) (Fission yeast).